A 564-amino-acid chain; its full sequence is Dihydroxy-acid dehydratase (564 aa).

Cys-55 serves as a coordination point for [2Fe-2S] cluster. Asp-87 contributes to the Mg(2+) binding site. Residue Cys-128 participates in [2Fe-2S] cluster binding. Mg(2+)-binding residues include Asp-129 and Lys-130. An N6-carboxylysine modification is found at Lys-130. [2Fe-2S] cluster is bound at residue Cys-200. Glu-452 is a binding site for Mg(2+). Ser-478 functions as the Proton acceptor in the catalytic mechanism.

This sequence belongs to the IlvD/Edd family. In terms of assembly, homodimer. The cofactor is [2Fe-2S] cluster. Requires Mg(2+) as cofactor.

It catalyses the reaction (2R)-2,3-dihydroxy-3-methylbutanoate = 3-methyl-2-oxobutanoate + H2O. The catalysed reaction is (2R,3R)-2,3-dihydroxy-3-methylpentanoate = (S)-3-methyl-2-oxopentanoate + H2O. Its pathway is amino-acid biosynthesis; L-isoleucine biosynthesis; L-isoleucine from 2-oxobutanoate: step 3/4. The protein operates within amino-acid biosynthesis; L-valine biosynthesis; L-valine from pyruvate: step 3/4. Functionally, functions in the biosynthesis of branched-chain amino acids. Catalyzes the dehydration of (2R,3R)-2,3-dihydroxy-3-methylpentanoate (2,3-dihydroxy-3-methylvalerate) into 2-oxo-3-methylpentanoate (2-oxo-3-methylvalerate) and of (2R)-2,3-dihydroxy-3-methylbutanoate (2,3-dihydroxyisovalerate) into 2-oxo-3-methylbutanoate (2-oxoisovalerate), the penultimate precursor to L-isoleucine and L-valine, respectively. The sequence is that of Dihydroxy-acid dehydratase from Polaromonas naphthalenivorans (strain CJ2).